The primary structure comprises 124 residues: Small ribosomal subunit protein uS13 (124 aa).

Residues 95–124 (GLPVRGQRTKTNARTRKGPKRTIAGKKKAK) form a disordered region.

The protein belongs to the universal ribosomal protein uS13 family. As to quaternary structure, part of the 30S ribosomal subunit. Forms a loose heterodimer with protein S19. Forms two bridges to the 50S subunit in the 70S ribosome.

Located at the top of the head of the 30S subunit, it contacts several helices of the 16S rRNA. In the 70S ribosome it contacts the 23S rRNA (bridge B1a) and protein L5 of the 50S subunit (bridge B1b), connecting the 2 subunits; these bridges are implicated in subunit movement. Contacts the tRNAs in the A and P-sites. In Rhodococcus jostii (strain RHA1), this protein is Small ribosomal subunit protein uS13.